The sequence spans 225 residues: Peptidyl-tRNA hydrolase (225 aa).

A tRNA-binding site is contributed by Tyr14. Residue His19 is the Proton acceptor of the active site. The tRNA site is built by Phe64, Asn66, and Asn112. Residues 184 to 225 (ALRMQPPKPEKPKPAAKAPEAQAPEAAPDERSALQKLADRFR) form a disordered region. The span at 198-209 (AAKAPEAQAPEA) shows a compositional bias: low complexity. The segment covering 211 to 225 (PDERSALQKLADRFR) has biased composition (basic and acidic residues).

Belongs to the PTH family. As to quaternary structure, monomer.

It is found in the cytoplasm. It catalyses the reaction an N-acyl-L-alpha-aminoacyl-tRNA + H2O = an N-acyl-L-amino acid + a tRNA + H(+). In terms of biological role, hydrolyzes ribosome-free peptidyl-tRNAs (with 1 or more amino acids incorporated), which drop off the ribosome during protein synthesis, or as a result of ribosome stalling. Functionally, catalyzes the release of premature peptidyl moieties from peptidyl-tRNA molecules trapped in stalled 50S ribosomal subunits, and thus maintains levels of free tRNAs and 50S ribosomes. This chain is Peptidyl-tRNA hydrolase, found in Cereibacter sphaeroides (strain ATCC 17023 / DSM 158 / JCM 6121 / CCUG 31486 / LMG 2827 / NBRC 12203 / NCIMB 8253 / ATH 2.4.1.) (Rhodobacter sphaeroides).